Reading from the N-terminus, the 368-residue chain is Phosphoserine aminotransferase (368 aa).

Arg-44 is an L-glutamate binding site. Residues 78–79 (AT), Trp-104, Thr-157, Asp-179, and Gln-202 contribute to the pyridoxal 5'-phosphate site. Lys-203 is subject to N6-(pyridoxal phosphate)lysine. 244–245 (NT) is a pyridoxal 5'-phosphate binding site.

The protein belongs to the class-V pyridoxal-phosphate-dependent aminotransferase family. SerC subfamily. As to quaternary structure, homodimer. It depends on pyridoxal 5'-phosphate as a cofactor.

Its subcellular location is the cytoplasm. The enzyme catalyses O-phospho-L-serine + 2-oxoglutarate = 3-phosphooxypyruvate + L-glutamate. It carries out the reaction 4-(phosphooxy)-L-threonine + 2-oxoglutarate = (R)-3-hydroxy-2-oxo-4-phosphooxybutanoate + L-glutamate. Its pathway is amino-acid biosynthesis; L-serine biosynthesis; L-serine from 3-phospho-D-glycerate: step 2/3. It participates in cofactor biosynthesis; pyridoxine 5'-phosphate biosynthesis; pyridoxine 5'-phosphate from D-erythrose 4-phosphate: step 3/5. Catalyzes the reversible conversion of 3-phosphohydroxypyruvate to phosphoserine and of 3-hydroxy-2-oxo-4-phosphonooxybutanoate to phosphohydroxythreonine. In Neisseria meningitidis serogroup A / serotype 4A (strain DSM 15465 / Z2491), this protein is Phosphoserine aminotransferase.